The primary structure comprises 768 residues: UPF0313 protein VV2143 (768 aa).

The 278-residue stretch at 363–640 (AYDMIKTSVN…LHKALLRYHD (278 aa)) folds into the Radical SAM core domain. Positions 377, 381, and 384 each coordinate [4Fe-4S] cluster. The disordered stretch occupies residues 674 to 768 (DARTPAQRRK…GGRNQPSRAR (95 aa)). Basic residues predominate over residues 679 to 689 (AQRRKSGRHGA). Polar residues predominate over residues 719–731 (GGQSNSAPSRSGS).

Belongs to the UPF0313 family. The cofactor is [4Fe-4S] cluster.

The sequence is that of UPF0313 protein VV2143 from Vibrio vulnificus (strain YJ016).